The following is a 329-amino-acid chain: Delta(7)-sterol 5(6)-desaturase erg32 (329 aa).

The next 2 helical transmembrane spans lie at 67-87 and 149-169; these read LFLITWIMGTLSYFLSASFAY and FYLFFSIALFLLFSDFLIYWI. One can recognise a Fatty acid hydroxylase domain in the interval 156-281; that stretch reads ALFLLFSDFL…FFTLFDRLCS (126 aa). Residues 170–175 carry the Histidine box-1 motif; sequence HRALHH. The short motif at 183-187 is the Histidine box-2 element; the sequence is HKLHH. The helical transmembrane segment at 210–230 threads the bilayer; the sequence is LPYHMFPFFFPLNKYVYLLLF. The Histidine box-3 motif lies at 257-262; it reads HHAAHH.

The protein belongs to the sterol desaturase family. The cofactor is Fe cation.

Its subcellular location is the endoplasmic reticulum membrane. It is found in the golgi apparatus membrane. The enzyme catalyses episterol + 2 Fe(II)-[cytochrome b5] + O2 + 2 H(+) = 5-dehydroepisterol + 2 Fe(III)-[cytochrome b5] + 2 H2O. Its pathway is steroid metabolism; ergosterol biosynthesis. Functionally, C-5 sterol desaturase; part of the third module of ergosterol biosynthesis pathway that includes by the late steps of the pathway. Erg31 and erg32 catalyze the introduction of a C-5 double bond in the B ring to produce 5-dehydroepisterol. The third module or late pathway involves the ergosterol synthesis itself through consecutive reactions that mainly occur in the endoplasmic reticulum (ER) membrane. Firstly, the squalene synthase erg9 catalyzes the condensation of 2 farnesyl pyrophosphate moieties to form squalene, which is the precursor of all steroids. Secondly, squalene is converted into lanosterol by the consecutive action of the squalene epoxidase erg1 and the lanosterol synthase erg7. The lanosterol 14-alpha-demethylase erg11/cyp1 catalyzes C14-demethylation of lanosterol to produce 4,4'-dimethyl cholesta-8,14,24-triene-3-beta-ol. In the next steps, a complex process involving various demethylation, reduction and desaturation reactions catalyzed by the C-14 reductase erg24 and the C-4 demethylation complex erg25-erg26-erg27 leads to the production of zymosterol. Erg28 likely functions in the C-4 demethylation complex reaction by tethering erg26 and Erg27 to the endoplasmic reticulum or to facilitate interaction between these proteins. Then, the sterol 24-C-methyltransferase erg6 catalyzes the methyl transfer from S-adenosyl-methionine to the C-24 of zymosterol to form fecosterol. The C-8 sterol isomerase erg2 catalyzes the reaction which results in unsaturation at C-7 in the B ring of sterols and thus converts fecosterol to episterol. The sterol-C5-desaturases erg31 and erg32 then catalyze the introduction of a C-5 double bond in the B ring to produce 5-dehydroepisterol. The C-22 sterol desaturase erg5 further converts 5-dehydroepisterol into ergosta-5,7,22,24(28)-tetraen-3beta-ol by forming the C-22(23) double bond in the sterol side chain. Finally, ergosta-5,7,22,24(28)-tetraen-3beta-ol is substrate of the C-24(28) sterol reductase erg4 to produce ergosterol. In the genus Schizosaccharomyces, a second route exists between lanosterol and fecosterol, via the methylation of lanosterol to eburicol by erg6, followed by C14-demethylation by erg11/cyp1 and C4-demethylation by the demethylation complex erg25-erg26-erg27. This is Delta(7)-sterol 5(6)-desaturase erg32 from Schizosaccharomyces pombe (strain 972 / ATCC 24843) (Fission yeast).